A 481-amino-acid chain; its full sequence is Bindin (481 aa).

The signal sequence occupies residues 1–20; that stretch reads MGFHQILVTVVALALASVRA. Positions 21–245 are excised as a propeptide; the sequence is EFPSRTDSPT…DSKRGARKKR (225 aa). 2 stretches are compositionally biased toward basic and acidic residues: residues 154–163 and 178–189; these read DGDLRKRRES and RKGDEPAGHTLK. Disordered regions lie at residues 154 to 193 and 219 to 243; these read DGDLRKRRESEDVDDDDVSKRASPRKGDEPAGHTLKDLAP and GHSPTRRATDNDAAVSDDSKRGARK. The tract at residues 352-360 is fucose-binding domain; sequence LRHLRHHSN. The segment at 376–481 is disordered; it reads SAMQEEEEEE…QPYGQGYLQG (106 aa). The span at 379-389 shows a compositional bias: acidic residues; that stretch reads QEEEEEEEEDA. The span at 406–416 shows a compositional bias: gly residues; the sequence is AGFGGGGGGGA. 2 stretches are compositionally biased toward low complexity: residues 417–440 and 464–481; these read MMSPQQMGGQPQGMIGQPQGMGFP and GMGMPPQGQPYGQGYLQG.

This sequence belongs to the bindin family.

It is found in the cytoplasmic vesicle. The protein resides in the secretory vesicle. It localises to the acrosome lumen. Functionally, species-specific sea urchin sperm protein required for adhesion of sperm to the egg surface during fertilization. Bindin coats the acrosomal process after it is externalized by the acrosome reaction. It binds to sulfated, fucose-containing polysaccharides on the vitelline layer receptor proteoglycans which cover the egg plasma membrane. The chain is Bindin from Strongylocentrotus purpuratus (Purple sea urchin).